The primary structure comprises 197 residues: Phospholipid hydroperoxide glutathione peroxidase (197 aa).

S40 carries the post-translational modification Phosphoserine. U73 is an active-site residue. U73 is a non-standard amino acid (selenocysteine).

This sequence belongs to the glutathione peroxidase family. Monomer. Has a tendency to form higher mass oligomers. Interacts with FUNDC1; this interaction promotes GPX4 recruitment into mitochondria through TOM/TIM complex where it is degraded by mitophagy.

Its subcellular location is the mitochondrion. The protein localises to the cytoplasm. It carries out the reaction a hydroperoxy polyunsaturated fatty acid + 2 glutathione = a hydroxy polyunsaturated fatty acid + glutathione disulfide + H2O. The enzyme catalyses 2 glutathione + H2O2 = glutathione disulfide + 2 H2O. It catalyses the reaction tert-butyl hydroperoxide + 2 glutathione = tert-butanol + glutathione disulfide + H2O. The catalysed reaction is cumene hydroperoxide + 2 glutathione = 2-phenylpropan-2-ol + glutathione disulfide + H2O. It carries out the reaction (9S)-hydroperoxy-(10E,12Z)-octadecadienoate + 2 glutathione = (9S)-hydroxy-(10E,12Z)-octadecadienoate + glutathione disulfide + H2O. The enzyme catalyses (13S)-hydroperoxy-(9Z,11E)-octadecadienoate + 2 glutathione = (13S)-hydroxy-(9Z,11E)-octadecadienoate + glutathione disulfide + H2O. It catalyses the reaction (5S)-hydroperoxy-(6E,8Z,11Z,14Z)-eicosatetraenoate + 2 glutathione = (5S)-hydroxy-(6E,8Z,11Z,14Z)-eicosatetraenoate + glutathione disulfide + H2O. The catalysed reaction is (12R)-hydroperoxy-(5Z,8Z,10E,14Z)-eicosatetraenoate + 2 glutathione = (12R)-hydroxy-(5Z,8Z,10E,14Z)-eicosatetraenoate + glutathione disulfide + H2O. It carries out the reaction (12S)-hydroperoxy-(5Z,8Z,10E,14Z)-eicosatetraenoate + 2 glutathione = (12S)-hydroxy-(5Z,8Z,10E,14Z)-eicosatetraenoate + glutathione disulfide + H2O. The enzyme catalyses (15S)-hydroperoxy-(5Z,8Z,11Z,13E)-eicosatetraenoate + 2 glutathione = (15S)-hydroxy-(5Z,8Z,11Z,13E)-eicosatetraenoate + glutathione disulfide + H2O. It catalyses the reaction (5S)-hydroperoxy-(6E,8Z,11Z,14Z,17Z)-eicosapentaenoate + 2 glutathione = (5S)-hydroxy-(6E,8Z,11Z,14Z,17Z)-eicosapentaenoate + glutathione disulfide + H2O. The catalysed reaction is (12S)-hydroperoxy-(5Z,8Z,10E,14Z,17Z)-eicosapentaenoate + 2 glutathione = (12S)-hydroxy-(5Z,8Z,10E,14Z,17Z)-eicosapentaenoate + glutathione disulfide + H2O. It carries out the reaction (15S)-hydroperoxy-(5Z,8Z,11Z,13E,17Z)-eicosapentaenoate + 2 glutathione = (15S)-hydroxy-(5Z,8Z,11Z,13E,17Z)-eicosapentaenoate + glutathione disulfide + H2O. The enzyme catalyses (15S)-hydroperoxy-(11Z,13E)-eicosadienoate + 2 glutathione = (15S)-hydroxy-(11Z,13E)-eicosadienoate + glutathione disulfide + H2O. It catalyses the reaction (17S)-hydroperoxy-(4Z,7Z,10Z,13Z,15E,19Z)-docosahexaenoate + 2 glutathione = (17S)-hydroxy-(4Z,7Z,10Z,13Z,15E,19Z)-docosahexaenoate + glutathione disulfide + H2O. The catalysed reaction is a hydroperoxy-1,2-diacyl-glycero-3-phosphocholine + 2 glutathione = a hydroxy-1,2-diacyl-glycero-3-phosphocholine + glutathione disulfide + H2O. Its function is as follows. Essential antioxidant peroxidase that directly reduces phospholipid hydroperoxide even if they are incorporated in membranes and lipoproteins. Can also reduce fatty acid hydroperoxide, cholesterol hydroperoxide and thymine hydroperoxide. Plays a key role in protecting cells from oxidative damage by preventing membrane lipid peroxidation. Required to prevent cells from ferroptosis, a non-apoptotic cell death resulting from an iron-dependent accumulation of lipid reactive oxygen species. The presence of selenocysteine (Sec) versus Cys at the active site is essential for life: it provides resistance to overoxidation and prevents cells against ferroptosis. The presence of Sec at the active site is also essential for the survival of a specific type of parvalbumin-positive interneurons, thereby preventing against fatal epileptic seizures. May be required to protect cells from the toxicity of ingested lipid hydroperoxides. Required for normal sperm development and male fertility. Essential for maturation and survival of photoreceptor cells. Plays a role in a primary T-cell response to viral and parasitic infection by protecting T-cells from ferroptosis and by supporting T-cell expansion. Plays a role of glutathione peroxidase in platelets in the arachidonic acid metabolism. Reduces hydroperoxy ester lipids formed by a 15-lipoxygenase that may play a role as down-regulator of the cellular 15-lipoxygenase pathway. Can also reduce small soluble hydroperoxides such as H2O2, cumene hydroperoxide and tert-butyl hydroperoxide. The protein is Phospholipid hydroperoxide glutathione peroxidase of Bos taurus (Bovine).